A 438-amino-acid polypeptide reads, in one-letter code: Glutamate-1-semialdehyde 2,1-aminomutase (438 aa).

K278 carries the post-translational modification N6-(pyridoxal phosphate)lysine.

It belongs to the class-III pyridoxal-phosphate-dependent aminotransferase family. HemL subfamily. As to quaternary structure, homodimer. Pyridoxal 5'-phosphate is required as a cofactor.

It is found in the cytoplasm. It carries out the reaction (S)-4-amino-5-oxopentanoate = 5-aminolevulinate. The protein operates within porphyrin-containing compound metabolism; protoporphyrin-IX biosynthesis; 5-aminolevulinate from L-glutamyl-tRNA(Glu): step 2/2. This chain is Glutamate-1-semialdehyde 2,1-aminomutase, found in Delftia acidovorans (strain DSM 14801 / SPH-1).